Consider the following 232-residue polypeptide: BTB/POZ domain-containing protein KCTD11 (232 aa).

Residues 1–49 (MLGAMFRAGTPMTPNLNPEGGGHYFIDRDGKAFRHILNFLRLGRLDLPL) enclose the BTB domain.

As to quaternary structure, homopentamer. Interacts with KCTD6 and KCTD21; KCTD11 and KCTD6 or KCTD21 may associate in pentameric assemblies. Component of the BCR(KCTD11) E3 ubiquitin ligase complex, at least composed of CUL3 and KCTD11 and RBX1. Interacts (via BTB domain) with CUL3; initially a 4:4 stoichiometry has been reported, however, electron microscopy revealed pentameric states of the BTB domain.

Its pathway is protein modification; protein ubiquitination. Its function is as follows. Plays a role as a marker and a regulator of neuronal differentiation; Up-regulated by a variety of neurogenic signals, such as retinoic acid, epidermal growth factor/EGF and NGFB/nerve growth factor. Induces apoptosis, growth arrest and the expression of cyclin-dependent kinase inhibitor CDKN1B. Plays a role as a tumor repressor and inhibits cell growth and tumorigenicity of medulloblastoma (MDB). Acts as a probable substrate-specific adapter for a BCR (BTB-CUL3-RBX1) E3 ubiquitin-protein ligase complex towards HDAC1. Functions as antagonist of the Hedgehog pathway on cell proliferation and differentiation by affecting the nuclear transfer of transcription factor GLI1, thus maintaining cerebellar granule cells in undifferentiated state, this effect probably occurs via HDAC1 down-regulation, keeping GLI1 acetylated and inactive. The protein is BTB/POZ domain-containing protein KCTD11 (KCTD11) of Bos taurus (Bovine).